We begin with the raw amino-acid sequence, 367 residues long: 5-amino-6-(D-ribitylamino)uracil--L-tyrosine 4-hydroxyphenyl transferase (367 aa).

The Radical SAM core domain maps to 56–290; sequence VTYVRNQNIN…MFAVARLFLD (235 aa). [4Fe-4S] cluster-binding residues include C70, C74, and C77.

Belongs to the radical SAM superfamily. CofH family. In terms of assembly, consists of two subunits, CofG and CofH. It depends on [4Fe-4S] cluster as a cofactor.

It carries out the reaction 5-amino-6-(D-ribitylamino)uracil + L-tyrosine + S-adenosyl-L-methionine = 5-amino-5-(4-hydroxybenzyl)-6-(D-ribitylimino)-5,6-dihydrouracil + 2-iminoacetate + 5'-deoxyadenosine + L-methionine + H(+). The protein operates within cofactor biosynthesis; coenzyme F0 biosynthesis. Functionally, catalyzes the radical-mediated synthesis of 5-amino-5-(4-hydroxybenzyl)-6-(D-ribitylimino)-5,6-dihydrouracil from 5-amino-6-(D-ribitylamino)uracil and L-tyrosine. In Methanoculleus marisnigri (strain ATCC 35101 / DSM 1498 / JR1), this protein is 5-amino-6-(D-ribitylamino)uracil--L-tyrosine 4-hydroxyphenyl transferase.